A 376-amino-acid chain; its full sequence is 23S rRNA (uracil(747)-C(5))-methyltransferase RlmC (376 aa).

[4Fe-4S] cluster is bound by residues Cys3, Cys11, Cys14, and Cys87. S-adenosyl-L-methionine contacts are provided by Gln212, Phe241, Glu262, and Asn307. Cys334 serves as the catalytic Nucleophile.

This sequence belongs to the class I-like SAM-binding methyltransferase superfamily. RNA M5U methyltransferase family. RlmC subfamily.

It carries out the reaction uridine(747) in 23S rRNA + S-adenosyl-L-methionine = 5-methyluridine(747) in 23S rRNA + S-adenosyl-L-homocysteine + H(+). Functionally, catalyzes the formation of 5-methyl-uridine at position 747 (m5U747) in 23S rRNA. This is 23S rRNA (uracil(747)-C(5))-methyltransferase RlmC from Yersinia pestis bv. Antiqua (strain Antiqua).